The sequence spans 227 residues: Bone marrow proteoglycan (227 aa).

The N-terminal stretch at 1-16 (MKFPLLLALLVGGAFA) is a signal peptide. Positions 17 to 110 (LHLSSEASDS…TSLMGDSGFK (94 aa)) are cleaved as a propeptide — acidic. Residues 21–105 (SEASDSKSPL…KEEDTTSLMG (85 aa)) are disordered. Residue Ser24 is glycosylated (O-linked (GalNAc...) serine). The segment covering 34-46 (SLPREAEISRPEV) has biased composition (basic and acidic residues). A compositionally biased stretch (acidic residues) spans 58–70 (LEEEEEEEEEEGS). Ser70 carries an O-linked (Xyl...) (chondroitin sulfate) serine glycan. Positions 128–227 (LVCRSCYRGT…GKRRPFICAY (100 aa)) constitute a C-type lectin domain. 2 cysteine pairs are disulfide-bonded: Cys130–Cys225 and Cys202–Cys217.

Nitrated.

Its subcellular location is the secreted. Cytotoxin and helminthotoxin. MBP also induces non-cytolytic histamine release from basophils. It is involved in antiparasitic defense mechanisms and immune hypersensitivity reactions. The sequence is that of Bone marrow proteoglycan (Prg2) from Rattus norvegicus (Rat).